Reading from the N-terminus, the 427-residue chain is Adenylosuccinate synthetase (427 aa).

GTP is bound by residues 13–19 and 41–43; these read GDEGKGK and GHT. Aspartate 14 acts as the Proton acceptor in catalysis. Mg(2+)-binding residues include aspartate 14 and glycine 41. IMP-binding positions include 14–17, 39–42, threonine 129, arginine 143, glutamine 224, threonine 239, and arginine 303; these read DEGK and NAGH. The Proton donor role is filled by histidine 42. Residues 117–137 form a disordered region; sequence QEKQRGEESLGTTKRGIGPAY. 299–305 is a binding site for substrate; that stretch reads TTTGRPR. Residues arginine 305, 331–333, and 414–416 each bind GTP; these read KLD and GTG.

The protein belongs to the adenylosuccinate synthetase family. In terms of assembly, homodimer. Mg(2+) serves as cofactor.

It localises to the cytoplasm. It carries out the reaction IMP + L-aspartate + GTP = N(6)-(1,2-dicarboxyethyl)-AMP + GDP + phosphate + 2 H(+). It participates in purine metabolism; AMP biosynthesis via de novo pathway; AMP from IMP: step 1/2. Functionally, plays an important role in the de novo pathway of purine nucleotide biosynthesis. Catalyzes the first committed step in the biosynthesis of AMP from IMP. This Caldicellulosiruptor saccharolyticus (strain ATCC 43494 / DSM 8903 / Tp8T 6331) protein is Adenylosuccinate synthetase.